Here is a 361-residue protein sequence, read N- to C-terminus: Putative agmatine deiminase (361 aa).

C354 (amidino-cysteine intermediate) is an active-site residue.

Belongs to the agmatine deiminase family.

It catalyses the reaction agmatine + H2O = N-carbamoylputrescine + NH4(+). This chain is Putative agmatine deiminase, found in Streptococcus pneumoniae (strain ATCC BAA-255 / R6).